The sequence spans 248 residues: 2,3-bisphosphoglycerate-dependent phosphoglycerate mutase (248 aa).

Substrate-binding positions include arginine 8 to asparagine 15, threonine 21 to glycine 22, arginine 60, glutamate 87 to tyrosine 90, lysine 98, arginine 114 to arginine 115, and glycine 183 to asparagine 184. The Tele-phosphohistidine intermediate role is filled by histidine 9. Residue glutamate 87 is the Proton donor/acceptor of the active site.

This sequence belongs to the phosphoglycerate mutase family. BPG-dependent PGAM subfamily.

It carries out the reaction (2R)-2-phosphoglycerate = (2R)-3-phosphoglycerate. It participates in carbohydrate degradation; glycolysis; pyruvate from D-glyceraldehyde 3-phosphate: step 3/5. Its function is as follows. Catalyzes the interconversion of 2-phosphoglycerate and 3-phosphoglycerate. The chain is 2,3-bisphosphoglycerate-dependent phosphoglycerate mutase from Borrelia hermsii (strain HS1 / DAH).